The sequence spans 201 residues: CMRF35-like molecule 7 (201 aa).

An N-terminal signal peptide occupies residues 1–17; it reads MWLPPALLLLSLSGCFS. An Ig-like V-type domain is found at 18–120; it reads IQGPESVRAP…PDLGTQVKVI (103 aa). Residues 18–151 lie on the Extracellular side of the membrane; sequence IQGPESVRAP…FIGSHKRNHY (134 aa). An intrachain disulfide couples Cys36 to Cys104. The chain crosses the membrane as a helical span at residues 152–172; that stretch reads MLLVFVKVPILLILVTAILWL. The Cytoplasmic segment spans residues 173–201; that stretch reads KGSQRVPEEPGEQPIYMNFSEPLTKDMAT. At Tyr188 the chain carries Phosphotyrosine; by FYN.

Belongs to the CD300 family. Interacts with TYROBP, which enhances cell surface expression and activation properties. Interacts with GRB2 in the presence of FYN. Phosphorylation on Tyr-188 by FYN is required for interaction with GRB2. As to expression, expressed exclusively in myeloid lineages.

It is found in the cell membrane. Functionally, acts as an activating immune receptor through its interaction with ITAM-bearing adapter TYROBP, and also independently by recruitment of GRB2. This Homo sapiens (Human) protein is CMRF35-like molecule 7 (CD300LB).